A 165-amino-acid chain; its full sequence is MKPVTTDLCDAHEDRLADGTLRVMAPVFRAFGKQGAFAGPAATLKVFEDNSLVRTALEAPGQGRVLVIDGGGSLRCALVGGNLGLLAEKNGWVGIVVNGCIRDTAELDVCDIGIRALAVHPQKSQKRNVGESDVAVQMPGAVVRPGNWIYVDADGVLVSDERLGN.

Residues 80–83 (GGNL) and Arg-102 each bind substrate. Asp-103 is a binding site for a divalent metal cation.

This sequence belongs to the class II aldolase/RraA-like family. In terms of assembly, homotrimer. It depends on a divalent metal cation as a cofactor.

It catalyses the reaction 4-hydroxy-4-methyl-2-oxoglutarate = 2 pyruvate. The catalysed reaction is oxaloacetate + H(+) = pyruvate + CO2. Functionally, catalyzes the aldol cleavage of 4-hydroxy-4-methyl-2-oxoglutarate (HMG) into 2 molecules of pyruvate. Also contains a secondary oxaloacetate (OAA) decarboxylase activity due to the common pyruvate enolate transition state formed following C-C bond cleavage in the retro-aldol and decarboxylation reactions. The polypeptide is Putative 4-hydroxy-4-methyl-2-oxoglutarate aldolase (Cupriavidus necator (strain ATCC 17699 / DSM 428 / KCTC 22496 / NCIMB 10442 / H16 / Stanier 337) (Ralstonia eutropha)).